The chain runs to 94 residues: Pyrimidine/purine nucleoside phosphorylase (94 aa).

This sequence belongs to the nucleoside phosphorylase PpnP family.

It catalyses the reaction a purine D-ribonucleoside + phosphate = a purine nucleobase + alpha-D-ribose 1-phosphate. It carries out the reaction adenosine + phosphate = alpha-D-ribose 1-phosphate + adenine. The enzyme catalyses cytidine + phosphate = cytosine + alpha-D-ribose 1-phosphate. The catalysed reaction is guanosine + phosphate = alpha-D-ribose 1-phosphate + guanine. It catalyses the reaction inosine + phosphate = alpha-D-ribose 1-phosphate + hypoxanthine. It carries out the reaction thymidine + phosphate = 2-deoxy-alpha-D-ribose 1-phosphate + thymine. The enzyme catalyses uridine + phosphate = alpha-D-ribose 1-phosphate + uracil. The catalysed reaction is xanthosine + phosphate = alpha-D-ribose 1-phosphate + xanthine. Functionally, catalyzes the phosphorolysis of diverse nucleosides, yielding D-ribose 1-phosphate and the respective free bases. Can use uridine, adenosine, guanosine, cytidine, thymidine, inosine and xanthosine as substrates. Also catalyzes the reverse reactions. This is Pyrimidine/purine nucleoside phosphorylase from Aeromonas hydrophila subsp. hydrophila (strain ATCC 7966 / DSM 30187 / BCRC 13018 / CCUG 14551 / JCM 1027 / KCTC 2358 / NCIMB 9240 / NCTC 8049).